A 318-amino-acid chain; its full sequence is NADH-ubiquinone oxidoreductase chain 1 (318 aa).

9 helical membrane passes run 2–22 (FLTNISCLIIPILLAVAFLTL), 36–56 (GPNIVGPYGLLQPIADAIKLF), 69–89 (LLFTIAPTLALSLALTLWIPL), 100–120 (LGMLFILAMSSLAVYSILWSG), 130–152 (IGALRAVAQTISYEVTLAIILLH), 171–191 (HIWLIIPSWPLTMMWFISTLA), 217–237 (AGPFALFFLAEYANIMMMNAL), 254–273 (LYSTNFMLKTTMLTISFLWI), and 294–314 (LPLTLALCMWHTSLLISLTSI).

The protein belongs to the complex I subunit 1 family.

The protein localises to the mitochondrion inner membrane. The catalysed reaction is a ubiquinone + NADH + 5 H(+)(in) = a ubiquinol + NAD(+) + 4 H(+)(out). Functionally, core subunit of the mitochondrial membrane respiratory chain NADH dehydrogenase (Complex I) that is believed to belong to the minimal assembly required for catalysis. Complex I functions in the transfer of electrons from NADH to the respiratory chain. The immediate electron acceptor for the enzyme is believed to be ubiquinone. The sequence is that of NADH-ubiquinone oxidoreductase chain 1 (MT-ND1) from Cyclopes didactylus (Silky anteater).